We begin with the raw amino-acid sequence, 274 residues long: Diaminopimelate epimerase (274 aa).

Substrate contacts are provided by Asn11, Gln44, and Asn64. Catalysis depends on Cys73, which acts as the Proton donor. Substrate-binding positions include 74-75 (GN), Asn157, Asn190, and 208-209 (ER). Residue Cys217 is the Proton acceptor of the active site. 218–219 (GS) lines the substrate pocket.

Belongs to the diaminopimelate epimerase family. As to quaternary structure, homodimer.

It is found in the cytoplasm. It carries out the reaction (2S,6S)-2,6-diaminopimelate = meso-2,6-diaminopimelate. Its pathway is amino-acid biosynthesis; L-lysine biosynthesis via DAP pathway; DL-2,6-diaminopimelate from LL-2,6-diaminopimelate: step 1/1. Its function is as follows. Catalyzes the stereoinversion of LL-2,6-diaminopimelate (L,L-DAP) to meso-diaminopimelate (meso-DAP), a precursor of L-lysine and an essential component of the bacterial peptidoglycan. The sequence is that of Diaminopimelate epimerase from Yersinia enterocolitica serotype O:8 / biotype 1B (strain NCTC 13174 / 8081).